The sequence spans 258 residues: E3 ubiquitin ligase TRIM40 (258 aa).

The segment at 14–56 (CPICQESLKEAVSTNCGHLFCRVCLTQHVEKASASGVFCCPLC) adopts an RING-type zinc-finger fold. Residues 66-107 (GTGYICPNHQKRVCRFCEESRLLLCVECLVSPEHMSHHELTI) form a B box-type zinc finger. Zn(2+) contacts are provided by Cys-71, His-74, Cys-93, and His-99. A coiled-coil region spans residues 107-159 (IENALSHYKERLNRRSRKLRKDIAELQRLKAQQEKKLQALQFQVDHGNHRLEA).

The protein belongs to the TRIM/RBCC family. As to quaternary structure, interacts with NEDD8. Highly expressed in normal gastrointestinal epithelia but that is down-regulated in gastrointestinal carcinomas and chronic inflammatory lesions of the gastrointestinal tract.

It catalyses the reaction S-ubiquitinyl-[E2 ubiquitin-conjugating enzyme]-L-cysteine + [acceptor protein]-L-lysine = [E2 ubiquitin-conjugating enzyme]-L-cysteine + N(6)-ubiquitinyl-[acceptor protein]-L-lysine.. In terms of biological role, E3 ubiquitin-protein ligase that plays a role in the limitation of the innate immune response. Mediates inhibition of the RLR signaling pathway by ubiquitinating RIGI and IFIH1 receptors, leading to their proteasomal degradation. Also promotes the neddylation of IKBKG/NEMO, stabilizing NFKBIA, and thereby inhibiting of NF-kappa-B nuclear translocation and activation. The protein is E3 ubiquitin ligase TRIM40 (TRIM40) of Homo sapiens (Human).